We begin with the raw amino-acid sequence, 242 residues long: Ribosomal RNA small subunit methyltransferase G (242 aa).

S-adenosyl-L-methionine is bound by residues Gly-79, Phe-84, 130–131 (AE), and Arg-150.

It belongs to the methyltransferase superfamily. RNA methyltransferase RsmG family.

Its subcellular location is the cytoplasm. In terms of biological role, specifically methylates the N7 position of a guanine in 16S rRNA. The chain is Ribosomal RNA small subunit methyltransferase G from Levilactobacillus brevis (strain ATCC 367 / BCRC 12310 / CIP 105137 / JCM 1170 / LMG 11437 / NCIMB 947 / NCTC 947) (Lactobacillus brevis).